Consider the following 328-residue polypeptide: Cell division protein ZipA (328 aa).

The Periplasmic portion of the chain corresponds to 1–4; it reads MDLN. The chain crosses the membrane as a helical span at residues 5–25; the sequence is TILIIVGIVALVALIVHGLWS. At 26-328 the chain is on the cytoplasmic side; that stretch reads NRREKSKYFD…NAEQAYLARV (303 aa). The interval 44 to 82 is disordered; the sequence is SLTSRSHTQEEMVQPNNISPNTYVENGHTPIPQPTTEKL. Over residues 57 to 67 the composition is skewed to polar residues; sequence QPNNISPNTYV.

Belongs to the ZipA family. Interacts with FtsZ via their C-terminal domains.

It localises to the cell inner membrane. Its function is as follows. Essential cell division protein that stabilizes the FtsZ protofilaments by cross-linking them and that serves as a cytoplasmic membrane anchor for the Z ring. Also required for the recruitment to the septal ring of downstream cell division proteins. This is Cell division protein ZipA from Haemophilus influenzae (strain ATCC 51907 / DSM 11121 / KW20 / Rd).